The chain runs to 493 residues: Glutamyl-tRNA(Gln) amidotransferase subunit A (493 aa).

Catalysis depends on charge relay system residues K78 and S158. S182 functions as the Acyl-ester intermediate in the catalytic mechanism.

It belongs to the amidase family. GatA subfamily. As to quaternary structure, heterotrimer of A, B and C subunits.

The enzyme catalyses L-glutamyl-tRNA(Gln) + L-glutamine + ATP + H2O = L-glutaminyl-tRNA(Gln) + L-glutamate + ADP + phosphate + H(+). In terms of biological role, allows the formation of correctly charged Gln-tRNA(Gln) through the transamidation of misacylated Glu-tRNA(Gln) in organisms which lack glutaminyl-tRNA synthetase. The reaction takes place in the presence of glutamine and ATP through an activated gamma-phospho-Glu-tRNA(Gln). The protein is Glutamyl-tRNA(Gln) amidotransferase subunit A of Methylorubrum extorquens (strain PA1) (Methylobacterium extorquens).